The primary structure comprises 427 residues: Serine--tRNA ligase (427 aa).

235–237 (TAE) contributes to the L-serine binding site. Residues 266 to 268 (RRE) and Val282 each bind ATP. L-serine is bound at residue Glu289. 353 to 356 (EASS) is an ATP binding site. L-serine is bound at residue Ser389.

Belongs to the class-II aminoacyl-tRNA synthetase family. Type-1 seryl-tRNA synthetase subfamily. Homodimer. The tRNA molecule binds across the dimer.

Its subcellular location is the cytoplasm. It carries out the reaction tRNA(Ser) + L-serine + ATP = L-seryl-tRNA(Ser) + AMP + diphosphate + H(+). The enzyme catalyses tRNA(Sec) + L-serine + ATP = L-seryl-tRNA(Sec) + AMP + diphosphate + H(+). It participates in aminoacyl-tRNA biosynthesis; selenocysteinyl-tRNA(Sec) biosynthesis; L-seryl-tRNA(Sec) from L-serine and tRNA(Sec): step 1/1. In terms of biological role, catalyzes the attachment of serine to tRNA(Ser). Is also able to aminoacylate tRNA(Sec) with serine, to form the misacylated tRNA L-seryl-tRNA(Sec), which will be further converted into selenocysteinyl-tRNA(Sec). This is Serine--tRNA ligase from Chlorobaculum parvum (strain DSM 263 / NCIMB 8327) (Chlorobium vibrioforme subsp. thiosulfatophilum).